Consider the following 215-residue polypeptide: LysM and putative peptidoglycan-binding domain-containing protein 2 (215 aa).

A disordered region spans residues 1-40 (MADLSPAPALREGGPRAHRPSAPSPPPRSRSTSEPEEAEL). Ala-2 carries the post-translational modification N-acetylalanine. A phosphoserine mark is found at Ser-5, Ser-24, Ser-33, and Ser-57. Residues 71–115 (VEHRVRAGDTLQGIALKYGVTMEQIKRANKLFTNDCIFLKKTLSI) enclose the LysM domain. Disordered stretches follow at residues 135–176 (ESET…EVSA) and 195–215 (RKLK…LYHS). Residues 145-156 (QEEEPVVSEEEL) show a composition bias toward acidic residues. Over residues 157–169 (PPPSPQDPDPKPA) the composition is skewed to pro residues. Residues 196-205 (KLKEESRDEE) are compositionally biased toward basic and acidic residues.

The sequence is that of LysM and putative peptidoglycan-binding domain-containing protein 2 (Lysmd2) from Mus musculus (Mouse).